The following is a 442-amino-acid chain: UDP-N-acetylglucosamine 1-carboxyvinyltransferase (442 aa).

Residue 22–23 (KN) participates in phosphoenolpyruvate binding. Arg-94 provides a ligand contact to UDP-N-acetyl-alpha-D-glucosamine. Catalysis depends on Asp-119, which acts as the Proton donor. The UDP-N-acetyl-alpha-D-glucosamine site is built by Asp-309 and Val-331.

Belongs to the EPSP synthase family. MurA subfamily.

Its subcellular location is the cytoplasm. The catalysed reaction is phosphoenolpyruvate + UDP-N-acetyl-alpha-D-glucosamine = UDP-N-acetyl-3-O-(1-carboxyvinyl)-alpha-D-glucosamine + phosphate. Its pathway is cell wall biogenesis; peptidoglycan biosynthesis. In terms of biological role, cell wall formation. Adds enolpyruvyl to UDP-N-acetylglucosamine. The sequence is that of UDP-N-acetylglucosamine 1-carboxyvinyltransferase from Chlamydia muridarum (strain MoPn / Nigg).